We begin with the raw amino-acid sequence, 97 residues long: Eotaxin (97 aa).

An N-terminal signal peptide occupies residues 1–23 (MQSSTALLFLLLTVTSFTSQVLA). Disulfide bonds link Cys32–Cys57 and Cys33–Cys73. An O-linked (GalNAc...) threonine glycan is attached at Thr94.

It belongs to the intercrine beta (chemokine CC) family. In terms of tissue distribution, expressed constitutively in the thymus. Expression inducible in the lung (type I alveolar epithelial cells), intestine, heart, spleen, kidney.

The protein resides in the secreted. In terms of biological role, in response to the presence of allergens, this protein directly promotes the accumulation of eosinophils (a prominent feature of allergic inflammatory reactions), but not lymphocytes, macrophages or neutrophils. Binds to CCR3. The polypeptide is Eotaxin (Ccl11) (Mus musculus (Mouse)).